Here is a 1520-residue protein sequence, read N- to C-terminus: Myosin-5 (1520 aa).

The Myosin N-terminal SH3-like domain occupies 7–56; it reads IVGSHVWVEDPHLAWIDGEVTRIDGINVHVKTKKGKTVVTNVYFPKDTEA. The Myosin motor domain occupies 59-729; it reads GGVDDMTKLS…QMAELDARRA (671 aa). Residues 153-160 and 206-214 each bind ATP; these read GESGAGKT and NNNSSRFGK. Actin-binding stretches follow at residues 492–526, 528–551, 586–610, and 610–632; these read LIEK…FQTF, EHER…AGEV, FHAL…KQQL, and LHSL…KPNN. 6 consecutive IQ domains span residues 732–761, 755–784, 780–809, 803–832, 828–857, and 851–880; these read LGNA…AAIV, IRNA…EAAA, IEAA…STIV, TRSS…RKAA, QRKA…AAIV, and LQKA…AARD. Residues 881 to 1047 adopt a coiled-coil conformation; that stretch reads TGALKDAKNK…ESENKVLRQQ (167 aa). The tract at residues 1062–1100 is disordered; sequence PKTTIIQRTPEKDTFSNGETTQLQEPETEDRPQKSLNQK. A compositionally biased stretch (polar residues) spans 1076-1086; it reads FSNGETTQLQE. The 316-residue stretch at 1148-1463 folds into the Dilute domain; sequence NRIIETIASA…IATMRAEVSD (316 aa).

It belongs to the TRAFAC class myosin-kinesin ATPase superfamily. Myosin family. Plant myosin class XI subfamily. As to quaternary structure, homodimer. Interacts with MYOB1 and MYOB2. Interacts with PHOX1.

Its subcellular location is the cytoplasm. Myosin heavy chain that is required for the cell cycle-regulated transport of various organelles and proteins for their segregation. Functions by binding with its tail domain to receptor proteins on organelles and exerting force with its N-terminal motor domain against actin filaments, thereby transporting its cargo along polarized actin cables. Contributes to the trafficking of Golgi stacks, mitochondria and peroxisomes. Required for development of pavement cells, trichomes, and stigmatic papillae. The chain is Myosin-5 (XI-1) from Arabidopsis thaliana (Mouse-ear cress).